A 110-amino-acid chain; its full sequence is UPF0122 protein SE_0911 (110 aa).

This sequence belongs to the UPF0122 family.

Its function is as follows. Might take part in the signal recognition particle (SRP) pathway. This is inferred from the conservation of its genetic proximity to ftsY/ffh. May be a regulatory protein. The sequence is that of UPF0122 protein SE_0911 from Staphylococcus epidermidis (strain ATCC 12228 / FDA PCI 1200).